Consider the following 257-residue polypeptide: Phosphate import ATP-binding protein PstB (257 aa).

An ABC transporter domain is found at 11 to 252 (IQVRDLNFYY…PAKKQTEDYI (242 aa)). 43–50 (GPSGCGKS) contacts ATP.

It belongs to the ABC transporter superfamily. Phosphate importer (TC 3.A.1.7) family. The complex is composed of two ATP-binding proteins (PstB), two transmembrane proteins (PstC and PstA) and a solute-binding protein (PstS).

It is found in the cell inner membrane. The enzyme catalyses phosphate(out) + ATP + H2O = ADP + 2 phosphate(in) + H(+). Part of the ABC transporter complex PstSACB involved in phosphate import. Responsible for energy coupling to the transport system. The polypeptide is Phosphate import ATP-binding protein PstB (Salmonella paratyphi A (strain ATCC 9150 / SARB42)).